We begin with the raw amino-acid sequence, 1502 residues long: Gem-associated protein 5 (1502 aa).

The important for interaction with U1 snRNA stretch occupies residues 1 to 124 (MKPEPRTLPP…LHWSPTVKDL (124 aa)). Positions 13–15 (NWY) are interaction with U4 snRNA. Ser-48 bears the Phosphoserine mark. 11 WD repeats span residues 62 to 104 (GHTE…VVTE), 107 to 148 (LHQH…QHLF), 150 to 189 (EPRT…EVIH), 193 to 264 (GHDD…GVMV), 280 to 321 (TVKE…RRKY), 333 to 374 (HSRI…CCWT), 377 to 417 (SLGG…NNYD), 424 to 464 (GVKS…PPQI), 468 to 509 (YHKK…VVLQ), 533 to 573 (RYKL…LLCT), and 576 to 622 (QHHK…ESNP). Residue Ser-624 is modified to Phosphoserine. WD repeat units lie at residues 637–677 (GHTA…PLFN) and 680–720 (GHRG…HSRP). 2 disordered regions span residues 740-797 (KLKK…SPVV) and 819-838 (SSKA…EALL). Lys-754 is covalently cross-linked (Glycyl lysine isopeptide (Lys-Gly) (interchain with G-Cter in SUMO2)). A phosphoserine mark is found at Ser-757, Ser-770, and Ser-778. The span at 825-838 (LKKEPAKEKPEALL) shows a compositional bias: basic and acidic residues. At Ser-845 the chain carries Phosphoserine. 2 disordered regions span residues 1309–1338 (VSDK…LSAE) and 1378–1427 (HQKS…SLPE). Residues 1355–1382 (ASLQTSQRTVAEVQETLAEMIRQHQKSQ) are a coiled coil. Over residues 1380–1391 (KSQLCKATTNGP) the composition is skewed to polar residues. The span at 1392-1407 (SRDEPSRDEPSQEAER) shows a compositional bias: basic and acidic residues.

It belongs to the WD repeat gemin-5 family. Part of the core SMN complex that contains SMN1, GEMIN2/SIP1, DDX20/GEMIN3, GEMIN4, GEMIN5, GEMIN6, GEMIN7, GEMIN8 and STRAP/UNRIP. Part of the SMN-Sm complex that contains SMN1, GEMIN2/SIP1, DDX20/GEMIN3, GEMIN4, GEMIN5, GEMIN6, GEMIN7, GEMIN8, STRAP/UNRIP and the Sm proteins SNRPB, SNRPD1, SNRPD2, SNRPD3, SNRPE, SNRPF and SNRPG. Interacts directly with SMN1, SNRPB, SNRPD1, SNRPD2, SNRPD3 and SNRPE. Identified in a SMN complex that contains GEMIN2/SIP1. Interacts with cytosolic DDX20/GEMIN3 and GEMIN4. Interacts with SNRNP70 and HNRNPU. Identified in a complex with 80S ribosomes; binds to the 60S large ribosomal subunit. Interacts with the ribosomal subunits RPL3 and RPL4.

Its subcellular location is the nucleus. The protein localises to the nucleoplasm. The protein resides in the gem. It is found in the cytoplasm. Its function is as follows. The SMN complex catalyzes the assembly of small nuclear ribonucleoproteins (snRNPs), the building blocks of the spliceosome, and thereby plays an important role in the splicing of cellular pre-mRNAs. Most spliceosomal snRNPs contain a common set of Sm proteins SNRPB, SNRPD1, SNRPD2, SNRPD3, SNRPE, SNRPF and SNRPG that assemble in a heptameric protein ring on the Sm site of the small nuclear RNA to form the core snRNP (Sm core). In the cytosol, the Sm proteins SNRPD1, SNRPD2, SNRPE, SNRPF and SNRPG are trapped in an inactive 6S pICln-Sm complex by the chaperone CLNS1A that controls the assembly of the core snRNP. To assemble core snRNPs, the SMN complex accepts the trapped 5Sm proteins from CLNS1A forming an intermediate. Binding of snRNA inside 5Sm ultimately triggers eviction of the SMN complex, thereby allowing binding of SNRPD3 and SNRPB to complete assembly of the core snRNP. Within the SMN complex, GEMIN5 recognizes and delivers the small nuclear RNAs (snRNAs) to the SMN complex. Binds to the 7-methylguanosine cap of RNA molecules. Binds to the 3'-UTR of SMN1 mRNA and regulates its translation; does not affect mRNA stability. May play a role in the regulation of protein synthesis via its interaction with ribosomes. The chain is Gem-associated protein 5 (Gemin5) from Mus musculus (Mouse).